Here is a 990-residue protein sequence, read N- to C-terminus: Serine/threonine-protein phosphatase 6 regulatory ankyrin repeat subunit B (990 aa).

28 ANK repeats span residues 7 to 36 (ADQP…DVNA), 40 to 69 (EKRT…RVNA), 73 to 102 (MWLT…DVNA), 106 to 135 (NWQT…SVNV), 139 to 168 (GGRT…NINA), 172 to 201 (KDRR…EVTC), 205 to 234 (KGYT…EIDE), 238 to 267 (YGNT…NVNQ), 271 to 301 (NGFT…DVNI), 305 to 334 (DGKS…EIDC), 338 to 367 (DGNT…DTAK), 371 to 400 (HNMF…EIDT), 404 to 433 (FGRT…DFNK), 437 to 466 (RGRT…NINE), 470 to 499 (WGRT…NAEE), 531 to 560 (EGYN…NMFE), 566 to 595 (ATKS…DLDI), 599 to 628 (KGRT…SVTV), 633 to 662 (TKRT…NPDV), 666 to 695 (KGQT…SVDA), 699 to 728 (LGCT…SILC), 732 to 761 (RGRT…SEED), 768 to 797 (QGYT…FRKF), 800 to 829 (NSFS…ASIV), 835 to 864 (KGRT…QVNA), 868 to 898 (AGKT…DLTL), 902 to 931 (DSNT…EQSL), and 938 to 967 (SLQT…CVLA).

As to quaternary structure, protein phosphatase 6 (PP6) holoenzyme is proposed to be a heterotrimeric complex formed by the catalytic subunit, a SAPS domain-containing subunit (PP6R) and an ankyrin repeat-domain containing regulatory subunit (ARS).

Functionally, putative regulatory subunit of protein phosphatase 6 (PP6) that may be involved in the recognition of phosphoprotein substrates. This Gallus gallus (Chicken) protein is Serine/threonine-protein phosphatase 6 regulatory ankyrin repeat subunit B (ANKRD44).